Consider the following 619-residue polypeptide: ATP-dependent zinc metalloprotease FtsH (619 aa).

Residues 1–11 lie on the Cytoplasmic side of the membrane; sequence MSNTDPQPPQK. Residues 12 to 32 form a helical membrane-spanning segment; that stretch reads LPLNWVVWTLAVALMLYYLPA. The Periplasmic segment spans residues 33–120; sequence MRDRPEPAIK…EVKEGHDASS (88 aa). The chain crosses the membrane as a helical span at residues 121 to 141; that stretch reads SKVILLSYLPWIMFMIILFWL. Over 142 to 619 the chain is Cytoplasmic; the sequence is SRRTFRNFSG…IDECLQTGAS (478 aa). 216–223 lines the ATP pocket; the sequence is GPPGTGKT. A Zn(2+)-binding site is contributed by histidine 437. Glutamate 438 is an active-site residue. Residues histidine 441 and aspartate 513 each coordinate Zn(2+).

In the central section; belongs to the AAA ATPase family. It in the C-terminal section; belongs to the peptidase M41 family. Homohexamer. It depends on Zn(2+) as a cofactor.

It localises to the cell inner membrane. Acts as a processive, ATP-dependent zinc metallopeptidase for both cytoplasmic and membrane proteins. Plays a role in the quality control of integral membrane proteins. This is ATP-dependent zinc metalloprotease FtsH from Hahella chejuensis (strain KCTC 2396).